The following is an 88-amino-acid chain: Period circadian protein (88 aa).

The tract at residues 23 to 88 is disordered; sequence VTNTSIAGTG…VTLTESLLNK (66 aa). Repeat copies occupy residues 30–31, 33–34, 35–36, 37–38, 39–40, 41–42, 43–44, 45–46, 47–48, 49–50, 51–52, 53–54, 55–56, 57–58, 59–60, and 61–62. Residues 30–62 are 16 X 2 AA tandem repeats of G-[TN]; that stretch reads GTGGTGTGTGTGTGTGTGTGTGTGTGTGTGTGN. The span at 30–62 shows a compositional bias: gly residues; the sequence is GTGGTGTGTGTGTGTGTGTGTGTGTGTGTGTGN. Polar residues predominate over residues 79-88; it reads VTLTESLLNK.

Forms a heterodimer with timeless (TIM); the complex then translocates into the nucleus. In terms of processing, phosphorylated with a circadian rhythmicity, probably by the double-time protein (dbt). Phosphorylation could be implicated in the stability of per monomer and in the formation of heterodimer per-tim.

The protein resides in the nucleus. The protein localises to the cytoplasm. It localises to the perinuclear region. In terms of biological role, essential for biological clock functions. Determines the period length of circadian and ultradian rhythms; an increase in PER dosage leads to shortened circadian rhythms and a decrease leads to lengthened circadian rhythms. Essential for the circadian rhythmicity of locomotor activity, eclosion behavior, and for the rhythmic component of the male courtship song that originates in the thoracic nervous system. The biological cycle depends on the rhythmic formation and nuclear localization of the TIM-PER complex. Light induces the degradation of TIM, which promotes elimination of PER. Nuclear activity of the heterodimer coordinatively regulates PER and TIM transcription through a negative feedback loop. Behaves as a negative element in circadian transcriptional loop. Does not appear to bind DNA, suggesting indirect transcriptional inhibition. In Drosophila teissieri (Fruit fly), this protein is Period circadian protein (per).